The chain runs to 522 residues: Kelch domain-containing protein 4 (522 aa).

Residues 1 to 10 are compositionally biased toward basic residues; that stretch reads MGKKGKKEKK. The tract at residues 1-33 is disordered; that stretch reads MGKKGKKEKKGRGAEKTAAKMEKKVSKRSRKEE. Positions 11–24 are enriched in basic and acidic residues; it reads GRGAEKTAAKMEKK. Kelch repeat units lie at residues 77-129, 133-187, 188-241, 243-289, and 308-361; these read ELIL…VVPQ, QLWV…AWKR, QLIL…VTPQ, GIII…MNPS, and QTLF…RRGR. Disordered regions lie at residues 346 to 378, 402 to 432, and 481 to 522; these read QLKG…GAGT, LAAP…PCPR, and DPET…GAED. A phosphoserine mark is found at S413 and S418. The stretch at 443-494 is one Kelch 6 repeat; it reads VLYVYGGMFEAGDRQVTLSDLHCLDLHRMEAWKALVEMDPETQEWLEETDSE.

The protein is Kelch domain-containing protein 4 (KLHDC4) of Pongo abelii (Sumatran orangutan).